The following is a 344-amino-acid chain: Putative 2-hydroxyacid dehydrogenase YoaD (344 aa).

Asp193 is an NAD(+) binding site. Arg251 is an active-site residue. Asp275 lines the NAD(+) pocket. The active site involves Glu280. Residue His300 is the Proton donor of the active site.

The protein belongs to the D-isomer specific 2-hydroxyacid dehydrogenase family.

The chain is Putative 2-hydroxyacid dehydrogenase YoaD (yoaD) from Bacillus subtilis (strain 168).